Reading from the N-terminus, the 605-residue chain is Elongation factor 4 (605 aa).

The region spanning lysine 11 to glutamine 193 is the tr-type G domain. GTP contacts are provided by residues aspartate 23–threonine 28 and asparagine 140–aspartate 143.

It belongs to the TRAFAC class translation factor GTPase superfamily. Classic translation factor GTPase family. LepA subfamily.

The protein resides in the cell membrane. The catalysed reaction is GTP + H2O = GDP + phosphate + H(+). Its function is as follows. Required for accurate and efficient protein synthesis under certain stress conditions. May act as a fidelity factor of the translation reaction, by catalyzing a one-codon backward translocation of tRNAs on improperly translocated ribosomes. Back-translocation proceeds from a post-translocation (POST) complex to a pre-translocation (PRE) complex, thus giving elongation factor G a second chance to translocate the tRNAs correctly. Binds to ribosomes in a GTP-dependent manner. In Onion yellows phytoplasma (strain OY-M), this protein is Elongation factor 4.